The following is a 99-amino-acid chain: Integration host factor subunit alpha (99 aa).

The interval 49 to 75 is disordered; the sequence is FGNFDLRDKNQRPGRNPKTGEDIPITA.

This sequence belongs to the bacterial histone-like protein family. As to quaternary structure, heterodimer of an alpha and a beta chain.

In terms of biological role, this protein is one of the two subunits of integration host factor, a specific DNA-binding protein that functions in genetic recombination as well as in transcriptional and translational control. The chain is Integration host factor subunit alpha from Salmonella arizonae (strain ATCC BAA-731 / CDC346-86 / RSK2980).